Reading from the N-terminus, the 292-residue chain is NAD kinase (292 aa).

D73 (proton acceptor) is an active-site residue. Residues 73 to 74 (DG), 147 to 148 (NE), H158, R175, D177, 188 to 193 (TAYSLS), and Q247 each bind NAD(+).

The protein belongs to the NAD kinase family. Requires a divalent metal cation as cofactor.

The protein resides in the cytoplasm. The catalysed reaction is NAD(+) + ATP = ADP + NADP(+) + H(+). Its function is as follows. Involved in the regulation of the intracellular balance of NAD and NADP, and is a key enzyme in the biosynthesis of NADP. Catalyzes specifically the phosphorylation on 2'-hydroxyl of the adenosine moiety of NAD to yield NADP. The chain is NAD kinase from Escherichia coli (strain SMS-3-5 / SECEC).